Reading from the N-terminus, the 265-residue chain is Diphthine synthase (265 aa).

S-adenosyl-L-methionine-binding positions include leucine 9, aspartate 85, isoleucine 88, 113–114, leucine 168, alanine 211, and histidine 236; that span reads TA.

It belongs to the diphthine synthase family. Homodimer.

The catalysed reaction is 2-[(3S)-amino-3-carboxypropyl]-L-histidyl-[translation elongation factor 2] + 3 S-adenosyl-L-methionine = diphthine-[translation elongation factor 2] + 3 S-adenosyl-L-homocysteine + 3 H(+). Its pathway is protein modification; peptidyl-diphthamide biosynthesis. Functionally, S-adenosyl-L-methionine-dependent methyltransferase that catalyzes the trimethylation of the amino group of the modified target histidine residue in translation elongation factor 2 (EF-2), to form an intermediate called diphthine. The three successive methylation reactions represent the second step of diphthamide biosynthesis. The protein is Diphthine synthase of Halorubrum lacusprofundi (strain ATCC 49239 / DSM 5036 / JCM 8891 / ACAM 34).